Here is a 434-residue protein sequence, read N- to C-terminus: Alpha-enolase (434 aa).

Serine 2 carries the post-translational modification N-acetylserine. Lysine 5 carries the N6-acetyllysine modification. Residue serine 40 coordinates Mg(2+). Tyrosine 44 is subject to Phosphotyrosine. Lysine 60 bears the N6-acetyllysine; alternate mark. Lysine 60 carries the N6-succinyllysine; alternate modification. N6-acetyllysine occurs at positions 64 and 71. The residue at position 89 (lysine 89) is an N6-acetyllysine; alternate. An N6-succinyllysine; alternate modification is found at lysine 89. An N6-acetyllysine mark is found at lysine 92 and lysine 126. Substrate is bound by residues histidine 158 and glutamate 167. Residues lysine 193 and lysine 199 each carry the N6-acetyllysine modification. Lysine 202 is subject to N6-acetyllysine; alternate. Lysine 202 participates in a covalent cross-link: Glycyl lysine isopeptide (Lys-Gly) (interchain with G-Cter in SUMO2); alternate. Glutamate 210 acts as the Proton donor in catalysis. N6-acetyllysine; alternate is present on residues lysine 228 and lysine 233. Position 228 is an N6-succinyllysine; alternate (lysine 228). An N6-(2-hydroxyisobutyryl)lysine; alternate modification is found at lysine 228. Lysine 233 bears the N6-malonyllysine; alternate mark. A Mg(2+)-binding site is contributed by aspartate 245. The residue at position 254 (serine 254) is a Phosphoserine. Residue lysine 256 is modified to N6-acetyllysine. At serine 263 the chain carries Phosphoserine. At lysine 281 the chain carries N6-acetyllysine; alternate. The residue at position 281 (lysine 281) is an N6-(2-hydroxyisobutyryl)lysine; alternate. Tyrosine 287 is modified (phosphotyrosine). A Phosphoserine modification is found at serine 291. Positions 293 and 318 each coordinate Mg(2+). Glutamate 293 and aspartate 318 together coordinate substrate. Lysine 335 and lysine 343 each carry N6-acetyllysine. Residue lysine 343 is the Proton acceptor of the active site. Residues serine 370 to serine 373 and lysine 394 each bind substrate. The interval alanine 405–lysine 434 is required for interaction with PLG. An N6-acetyllysine modification is found at lysine 406. Lysine 420 bears the N6-acetyllysine; alternate mark. Position 420 is an N6-succinyllysine; alternate (lysine 420). Position 420 is an N6-malonyllysine; alternate (lysine 420).

It belongs to the enolase family. As to quaternary structure, mammalian enolase is composed of 3 isozyme subunits, alpha, beta and gamma, which can form homodimers or heterodimers which are cell-type and development-specific. ENO1 interacts with PLG in the neuronal plasma membrane and promotes its activation. The C-terminal lysine is required for this binding. Interacts with ENO4 and PGAM2. Interacts with CMTM6. The cofactor is Mg(2+). ISGylated. In terms of processing, lysine 2-hydroxyisobutyrylation (Khib) by p300/EP300 activates the phosphopyruvate hydratase activity. In terms of tissue distribution, the alpha/alpha homodimer is expressed in embryo and in most adult tissues. The alpha/beta heterodimer and the beta/beta homodimer are found in striated muscle, and the alpha/gamma heterodimer and the gamma/gamma homodimer in neurons.

It is found in the cytoplasm. The protein resides in the cell membrane. It catalyses the reaction (2R)-2-phosphoglycerate = phosphoenolpyruvate + H2O. The protein operates within carbohydrate degradation; glycolysis; pyruvate from D-glyceraldehyde 3-phosphate: step 4/5. Its function is as follows. Glycolytic enzyme the catalyzes the conversion of 2-phosphoglycerate to phosphoenolpyruvate. In addition to glycolysis, involved in various processes such as growth control, hypoxia tolerance and allergic responses. May also function in the intravascular and pericellular fibrinolytic system due to its ability to serve as a receptor and activator of plasminogen on the cell surface of several cell-types such as leukocytes and neurons. Stimulates immunoglobulin production. The sequence is that of Alpha-enolase (ENO1) from Bos taurus (Bovine).